Reading from the N-terminus, the 262-residue chain is Phosphomannomutase 1 (262 aa).

At Ala-2 the chain carries N-acetylalanine. The active-site Nucleophile is the Asp-19. The Mg(2+) site is built by Asp-19 and Asp-21. The active-site Proton donor/acceptor is Asp-21. The alpha-D-mannose 1-phosphate site is built by Arg-28, Arg-132, Arg-143, Arg-150, Met-186, Ser-188, and Asp-190. Residues Asn-218, Tyr-230, Asp-232, and Thr-235 each contribute to the Mg(2+) site. Phosphoserine is present on Ser-242.

This sequence belongs to the eukaryotic PMM family. In terms of assembly, homodimer. Mg(2+) is required as a cofactor. In terms of tissue distribution, present in brain, where it is restricted to neuronal cell bodies. Present at lower levels in pancreas, liver, lung, gonads, uterus, adrenal glands and pituitary (at protein level). Undetectable in intestine.

It localises to the cytoplasm. The catalysed reaction is alpha-D-mannose 1-phosphate = D-mannose 6-phosphate. The protein operates within nucleotide-sugar biosynthesis; GDP-alpha-D-mannose biosynthesis; alpha-D-mannose 1-phosphate from D-fructose 6-phosphate: step 2/2. IMP, a metabolite whose concentration is elevated in anoxia, inhibits phosphomannomutase and phosphoglucomutase activities and strongly enhances glucose-1,6-bisphosphatase activity. In terms of biological role, involved in the synthesis of the GDP-mannose and dolichol-phosphate-mannose required for a number of critical mannosyl transfer reactions. In addition, may be responsible for the degradation of glucose-1,6-bisphosphate in ischemic brain. The sequence is that of Phosphomannomutase 1 (Pmm1) from Mus musculus (Mouse).